The sequence spans 402 residues: Putative PDZ domain-containing protein PDZK1P1 (402 aa).

2 PDZ domains span residues 12-93 and 121-206; these read RLCY…VDKE and IVEM…VDKE. Residues 230 to 258 form a disordered region; sequence GSVKEAPAPTPTSLEVSSPPDTTEEEDHK. The span at 240–250 shows a compositional bias: polar residues; that stretch reads PTSLEVSSPPD. The region spanning 261–341 is the PDZ 3 domain; sequence LCRLAKGENG…NVTLLVCGKK (81 aa). The tract at residues 362–402 is disordered; it reads DTPPDSKEGIVVESKHDSHMAKERAHSTASHSSSNSEDTEM. Residues 365–387 show a composition bias toward basic and acidic residues; that stretch reads PDSKEGIVVESKHDSHMAKERAH. Residues 388-402 are compositionally biased toward low complexity; sequence STASHSSSNSEDTEM.

It belongs to the NHER family.

This is Putative PDZ domain-containing protein PDZK1P1 from Homo sapiens (Human).